A 213-amino-acid polypeptide reads, in one-letter code: Uridine kinase (213 aa).

Residue 14–21 (GASASGKS) coordinates ATP.

It belongs to the uridine kinase family.

The protein resides in the cytoplasm. The enzyme catalyses uridine + ATP = UMP + ADP + H(+). It carries out the reaction cytidine + ATP = CMP + ADP + H(+). Its pathway is pyrimidine metabolism; CTP biosynthesis via salvage pathway; CTP from cytidine: step 1/3. It functions in the pathway pyrimidine metabolism; UMP biosynthesis via salvage pathway; UMP from uridine: step 1/1. In Vibrio cholerae serotype O1 (strain ATCC 39315 / El Tor Inaba N16961), this protein is Uridine kinase.